Consider the following 360-residue polypeptide: Cell division protein DivIB (360 aa).

Residues 1–54 are disordered; it reads MTEKDSNVEESVLEVEQASQVELDSEQISPAEKESVLAEEKEFSTDVDIPEMTA. The Cytoplasmic portion of the chain corresponds to 1–139; it reads MTEKDSNVEE…VDIPSKVVWK (139 aa). The segment covering 17-28 has biased composition (polar residues); that stretch reads QASQVELDSEQI. The segment covering 31 to 44 has biased composition (basic and acidic residues); the sequence is AEKESVLAEEKEFS. A helical transmembrane segment spans residues 140-160; sequence AIPVLVTSLLLAALALYFISP. Topologically, residues 161-360 are extracellular; sequence TSKKKQIEVV…MEVGIYRYAS (200 aa). A POTRA domain is found at 162–233; that stretch reads SKKKQIEVVG…ATFTIHIKEY (72 aa).

Belongs to the FtsQ/DivIB family. DivIB subfamily.

It localises to the cell membrane. Cell division protein that may be involved in stabilizing or promoting the assembly of the division complex. The chain is Cell division protein DivIB from Streptococcus suis (strain GZ1).